Here is a 176-residue protein sequence, read N- to C-terminus: Co-chaperone protein HscB homolog (176 aa).

A J domain is found at 7–79 (THFSLFGLPE…LKRATYLLHL (73 aa)).

The protein belongs to the HscB family. In terms of assembly, interacts with HscA and stimulates its ATPase activity.

Its function is as follows. Co-chaperone involved in the maturation of iron-sulfur cluster-containing proteins. Seems to help targeting proteins to be folded toward HscA. The sequence is that of Co-chaperone protein HscB homolog from Ralstonia nicotianae (strain ATCC BAA-1114 / GMI1000) (Ralstonia solanacearum).